The following is a 134-amino-acid chain: uncharacterized protein (134 aa).

It to E.coli YbcV and YdfO.

This is an uncharacterized protein from Escherichia coli (strain K12).